The following is a 652-amino-acid chain: MGELPFLSPEGARGPHINRGSLSSLEQGSVTGTEARHSLGVLHVSYSVSNRVGPWWNIKSCQQKWDRQILKDVSLYIESGQIMCILGSSGSGKTTLLDAISGRLRRTGTLEGEVFVNGCELRRDQFQDCFSYVLQSDVFLSSLTVRETLRYTAMLALCRSSADFYNKKVEAVMTELSLSHVADQMIGSYNFGGISSGERRRVSIAAQLLQDPKVMMLDEPTTGLDCMTANQIVLLLAELARRDRIVIVTIHQPRSELFQHFDKIAILTYGELVFCGTPEEMLGFFNNCGYPCPEHSNPFDFYMDLTSVDTQSREREIETYKRVQMLECAFKESDIYHKILENIERARYLKTLPTVPFKTKDPPGMFGKLGVLLRRVTRNLMRNKQAVIMRLVQNLIMGLFLIFYLLRVQNNTLKGAVQDRVGLLYQLVGATPYTGMLNAVNLFPMLRAVSDQESQDGLYHKWQMLLAYVLHVLPFSVIATVIFSSVCYWTLGLYPEVARFGYFSAALLAPHLIGEFLTLVLLGIVQNPNIVNSIVALLSISGLLIGSGFIRNIQEMPIPLKILGYFTFQKYCCEILVVNEFYGLNFTCGGSNTSMLNHPMCAITQGVQFIEKTCPGATSRFTANFLILYGFIPALVILGIVIFKVRDYLISR.

The segment at 1 to 25 (MGELPFLSPEGARGPHINRGSLSSL) is disordered. At 1 to 384 (MGELPFLSPE…RVTRNLMRNK (384 aa)) the chain is on the cytoplasmic side. The 256-residue stretch at 39-294 (LGVLHVSYSV…FNNCGYPCPE (256 aa)) folds into the ABC transporter domain. C61 carries S-palmitoyl cysteine lipidation. 87–94 (GSSGSGKT) is a binding site for ATP. A helical transmembrane segment spans residues 385-405 (QAVIMRLVQNLIMGLFLIFYL). The ABC transmembrane type-2 domain occupies 389 to 646 (MRLVQNLIMG…ILGIVIFKVR (258 aa)). The Extracellular segment spans residues 406-422 (LRVQNNTLKGAVQDRVG). A glycan (N-linked (GlcNAc...) asparagine) is linked at N410. The helical transmembrane segment at 423–443 (LLYQLVGATPYTGMLNAVNLF) threads the bilayer. The Cytoplasmic segment spans residues 444–468 (PMLRAVSDQESQDGLYHKWQMLLAY). The chain crosses the membrane as a helical span at residues 469–490 (VLHVLPFSVIATVIFSSVCYWT). Over 491-501 (LGLYPEVARFG) the chain is Extracellular. Residues 502 to 522 (YFSAALLAPHLIGEFLTLVLL) form a helical membrane-spanning segment. Topologically, residues 523-529 (GIVQNPN) are cytoplasmic. Residues 530–550 (IVNSIVALLSISGLLIGSGFI) traverse the membrane as a helical segment. Residues 551-624 (RNIQEMPIPL…PGATSRFTAN (74 aa)) are Extracellular-facing. 2 N-linked (GlcNAc...) asparagine glycosylation sites follow: N585 and N592. Residues 625–645 (FLILYGFIPALVILGIVIFKV) traverse the membrane as a helical segment. The Cytoplasmic segment spans residues 646-652 (RDYLISR).

This sequence belongs to the ABC transporter superfamily. ABCG family. Eye pigment precursor importer (TC 3.A.1.204) subfamily. In terms of assembly, heterodimer with ABCG8. It depends on Mg(2+) as a cofactor. In terms of processing, N-glycosylated. N-glycosylation is important for efficient export out of the endoplasmic reticulum. In terms of tissue distribution, detected in liver and jejunum. Detected on enterocyte villi (at protein level). Expressed in jejunum, ileum and, at lower level, in the liver.

It localises to the cell membrane. The protein localises to the apical cell membrane. The catalysed reaction is cholesterol(in) + ATP + H2O = cholesterol(out) + ADP + phosphate + H(+). The enzyme catalyses sitosterol(in) + ATP + H2O = sitosterol(out) + ADP + phosphate + H(+). Its activity is regulated as follows. Cholesterol transport is inhibited by vanadate and by beryllium fluoride. In terms of biological role, ABCG5 and ABCG8 form an obligate heterodimer that mediates Mg(2+)- and ATP-dependent sterol transport across the cell membrane. Plays an essential role in the selective transport of dietary plant sterols and cholesterol in and out of the enterocytes and in the selective sterol excretion by the liver into bile. Required for normal sterol homeostasis. The heterodimer with ABCG8 has ATPase activity. The polypeptide is ATP-binding cassette sub-family G member 5 (Mus musculus (Mouse)).